Consider the following 165-residue polypeptide: Xanthine-guanine phosphoribosyltransferase (165 aa).

Residues 41 to 42 (RG) and 98 to 106 (DDLTDTGKT) contribute to the 5-phospho-alpha-D-ribose 1-diphosphate site. Mg(2+) is bound at residue aspartate 99. Aspartate 102 and isoleucine 145 together coordinate guanine. Aspartate 102 and isoleucine 145 together coordinate xanthine. GMP-binding positions include 102-106 (DTGKT) and 144-145 (WI).

Belongs to the purine/pyrimidine phosphoribosyltransferase family. XGPT subfamily. In terms of assembly, homotetramer. It depends on Mg(2+) as a cofactor.

It localises to the cell inner membrane. It carries out the reaction GMP + diphosphate = guanine + 5-phospho-alpha-D-ribose 1-diphosphate. The catalysed reaction is XMP + diphosphate = xanthine + 5-phospho-alpha-D-ribose 1-diphosphate. The enzyme catalyses IMP + diphosphate = hypoxanthine + 5-phospho-alpha-D-ribose 1-diphosphate. It functions in the pathway purine metabolism; GMP biosynthesis via salvage pathway; GMP from guanine: step 1/1. It participates in purine metabolism; XMP biosynthesis via salvage pathway; XMP from xanthine: step 1/1. Functionally, purine salvage pathway enzyme that catalyzes the transfer of the ribosyl-5-phosphate group from 5-phospho-alpha-D-ribose 1-diphosphate (PRPP) to the N9 position of the 6-oxopurines guanine and xanthine to form the corresponding ribonucleotides GMP (guanosine 5'-monophosphate) and XMP (xanthosine 5'-monophosphate), with the release of PPi. To a lesser extent, also acts on hypoxanthine. The sequence is that of Xanthine-guanine phosphoribosyltransferase from Chelativorans sp. (strain BNC1).